The primary structure comprises 488 residues: MINRQLSRLLLCSILGSTTLISGCALVRKDSAPHQQLKPEQIKLADDIHLASSGWPQAQWWKQLNDPQLDALIQRTLSGSHTLAEAKLREEKAQSQADLLDAGSQLQVAALGMLNRQRVSANGFLSPYAMDAPALGMDGPYYTEATVGLFAGLDLDLWGVHRSAVTAAIGAHNAALAETAAVELSLTTGVAQLYYSMQASYQMLDLLEQTRDVIDYAVKAHQSKVAHGLEAQVPFHGARAQILAVDKQIAAVKGQITETRESLRALIGAGASDMPEIKPVALPRVQTGIPATLSYELLARRPDLQAMRWYVQASLDQVDSARALFYPSFDIKAFFGLDSIHLDTLFKKTSRQFNFIPGLKLPLFDGGRLNANLEGTRAASNMMIERYNQSVLNAVRDVAVNGTRLQTLNDEREMQAERVEATRFTQRAAEAAYQRGLTSRLQATEARLPVLAEEMSLLMLDSRRVIQSIQLMKSLGSGYQAAPVVEKK.

Residues 1 to 23 form the signal peptide; sequence MINRQLSRLLLCSILGSTTLISG. Cys-24 carries the N-palmitoyl cysteine lipid modification. Cys-24 carries S-diacylglycerol cysteine lipidation.

It belongs to the outer membrane factor (OMF) (TC 1.B.17) family. Could be part of a tripartite efflux system composed of MdtN, MdtO and MdtP.

The protein resides in the cell outer membrane. In terms of biological role, could be involved in resistance to puromycin, acriflavine and tetraphenylarsonium chloride. This Escherichia coli O157:H7 protein is Multidrug resistance outer membrane protein MdtP (mdtP).